The following is a 273-amino-acid chain: Histone H1.2 (273 aa).

The disordered stretch occupies residues 1–63 (MSIEEENVPT…TKKKTTSSHP (63 aa)). Serine 2 is subject to N-acetylserine. Serine 14 is subject to Phosphoserine. A compositionally biased stretch (basic residues) spans 33-59 (GKSKKTTTAKATKKPVKAAAPTKKKTT). An H15 domain is found at 61–130 (SHPTYEEMIK…KVKASFKIPS (70 aa)). Glycyl lysine isopeptide (Lys-Gly) (interchain with G-Cter in ubiquitin) cross-links involve residues lysine 156 and lysine 165. Composition is skewed to low complexity over residues 193-216 (KVTA…VAAK) and 237-256 (KKVA…PAKS). Positions 193 to 273 (KVTAAKPKSK…KRASTRKAKK (81 aa)) are disordered. Residues 257–273 (VKVKSPAKRASTRKAKK) are compositionally biased toward basic residues.

Belongs to the histone H1/H5 family.

It is found in the nucleus. The protein localises to the chromosome. Histones H1 are necessary for the condensation of nucleosome chains into higher-order structures. This Arabidopsis thaliana (Mouse-ear cress) protein is Histone H1.2.